The sequence spans 372 residues: Glutamate 5-kinase (372 aa).

Position 14 (K14) interacts with ATP. Residues S54, D141, and N153 each coordinate substrate. 173–174 (TD) serves as a coordination point for ATP. In terms of domain architecture, PUA spans 280–358 (RGRVVIDAGA…SEIESVLGHL (79 aa)).

The protein belongs to the glutamate 5-kinase family.

It localises to the cytoplasm. The catalysed reaction is L-glutamate + ATP = L-glutamyl 5-phosphate + ADP. It participates in amino-acid biosynthesis; L-proline biosynthesis; L-glutamate 5-semialdehyde from L-glutamate: step 1/2. Catalyzes the transfer of a phosphate group to glutamate to form L-glutamate 5-phosphate. In Cupriavidus pinatubonensis (strain JMP 134 / LMG 1197) (Cupriavidus necator (strain JMP 134)), this protein is Glutamate 5-kinase.